The sequence spans 958 residues: Coiled-coil domain-containing protein 187 (958 aa).

A compositionally biased stretch (low complexity) spans 116-132; that stretch reads SSVSSGRMSGSSGGHES. Disordered regions lie at residues 116–160, 345–447, 470–492, and 510–602; these read SSVS…SDPR, ELTR…PRFF, QDIS…QRPW, and EPSP…KAQA. Polar residues-rich tracts occupy residues 374–398 and 470–491; these read LQST…NSSL and QDIS…SQRP. Residues 536–545 are compositionally biased toward low complexity; sequence SSPSSKGKSA. Positions 718–743 form a coiled coil; sequence KQARLQALETMAEALRQRVDILTTKL. The segment at 916-958 is disordered; sequence EVKKEGLVTPWTTRSCGKGEPADRPWAGWSGGQGGLPWASSTA.

The sequence is that of Coiled-coil domain-containing protein 187 from Mus musculus (Mouse).